We begin with the raw amino-acid sequence, 215 residues long: Chaperone protein TorD (215 aa).

The protein belongs to the TorD/DmsD family. TorD subfamily.

It is found in the cytoplasm. In terms of biological role, involved in the biogenesis of TorA. Acts on TorA before the insertion of the molybdenum cofactor and, as a result, probably favors a conformation of the apoenzyme that is competent for acquiring the cofactor. In Shewanella piezotolerans (strain WP3 / JCM 13877), this protein is Chaperone protein TorD.